Reading from the N-terminus, the 334-residue chain is Phosphate acyltransferase (334 aa).

The protein belongs to the PlsX family. As to quaternary structure, homodimer. Probably interacts with PlsY.

It is found in the cytoplasm. It carries out the reaction a fatty acyl-[ACP] + phosphate = an acyl phosphate + holo-[ACP]. Its pathway is lipid metabolism; phospholipid metabolism. Its function is as follows. Catalyzes the reversible formation of acyl-phosphate (acyl-PO(4)) from acyl-[acyl-carrier-protein] (acyl-ACP). This enzyme utilizes acyl-ACP as fatty acyl donor, but not acyl-CoA. This chain is Phosphate acyltransferase, found in Caldicellulosiruptor saccharolyticus (strain ATCC 43494 / DSM 8903 / Tp8T 6331).